Reading from the N-terminus, the 145-residue chain is Basic phospholipase A2 S6-45 (145 aa).

The signal sequence occupies residues 1 to 19; sequence MYPAHLLVLLAVCVSLLGA. Residues 20–27 constitute a propeptide that is removed on maturation; the sequence is SDIPPQPL. 7 disulfide bridges follow: C38–C99, C54–C144, C56–C72, C71–C127, C78–C120, C88–C113, and C106–C118. The Ca(2+) site is built by Y55, G57, and G59. Residue H75 is part of the active site. D76 provides a ligand contact to Ca(2+). D121 is a catalytic residue.

Belongs to the phospholipase A2 family. Group I subfamily. D49 sub-subfamily. Ca(2+) is required as a cofactor. Expressed by the venom gland.

The protein resides in the secreted. The catalysed reaction is a 1,2-diacyl-sn-glycero-3-phosphocholine + H2O = a 1-acyl-sn-glycero-3-phosphocholine + a fatty acid + H(+). In terms of biological role, snake venom phospholipase A2 (PLA2) that inhibits collagen-induced platelet aggregation. PLA2 catalyzes the calcium-dependent hydrolysis of the 2-acyl groups in 3-sn-phosphoglycerides. This Austrelaps superbus (Lowland copperhead snake) protein is Basic phospholipase A2 S6-45.